The primary structure comprises 248 residues: MVDRVKTGIPGMDDILYGGIPRRNVVLLSGGPGTGKSIFSYQYLWNGLREGEPGVFVALEEHPVQVRINMAQFGWDVREYERQGLFAVVDAFTSGIGEAAKKERYVVTDPEDVGLLIDVLKEAIRDVGAKRVAVDSVSTLYLAKPVLARRTVMLLKRVLSGLGTTSILVSQVSVTERGFGGPGVEHAADGIIRLDLDEVDGELVRSLIIWKMRGTKHSMRRHPFEITDKGIIVYPDKVVRIGRRVSIE.

Residues 3-247 form the KaiC domain; sequence DRVKTGIPGM…VVRIGRRVSI (245 aa). 30 to 37 serves as a coordination point for ATP; sequence GGPGTGKS.

It belongs to the UPF0273 family.

In Aeropyrum pernix (strain ATCC 700893 / DSM 11879 / JCM 9820 / NBRC 100138 / K1), this protein is UPF0273 protein APE_1505.1.